We begin with the raw amino-acid sequence, 704 residues long: Mannan-binding lectin serine protease 1 (704 aa).

The N-terminal stretch at 1–24 (MRFLSFRRLLLYHVLCLTLTEVSA) is a signal peptide. In terms of domain architecture, CUB 1 spans 25-143 (HTVELNEMFG…TGFDAHYMAV (119 aa)). Residues 25 to 189 (HTVELNEMFG…HTDNRTCRVE (165 aa)) are homodimerization. Residues 25 to 189 (HTVELNEMFG…HTDNRTCRVE (165 aa)) are interaction with MBL2. Residues 25–283 (HTVELNEMFG…STQSHSIQIL (259 aa)) are interaction with FCN2. Residues 25–305 (HTVELNEMFG…RLSYRAAGNE (281 aa)) are interaction with MBL1. Residue Asn-54 is glycosylated (N-linked (GlcNAc...) asparagine). Positions 73, 81, 126, 128, 144, 145, and 147 each coordinate Ca(2+). An intrachain disulfide couples Cys-78 to Cys-96. Residues 144 to 187 (DVDECKEREDEELSCDHYCHNYIGGYYCSCRFGYILHTDNRTCR) form the EGF-like; calcium-binding domain. Intrachain disulfides connect Cys-148–Cys-162, Cys-158–Cys-171, Cys-173–Cys-186, and Cys-190–Cys-217. Ca(2+) is bound by residues Asn-164, Tyr-165, and Gly-168. Position 164 is a (3R)-3-hydroxyasparagine (Asn-164). The N-linked (GlcNAc...) asparagine glycan is linked to Asn-183. The CUB 2 domain maps to 190 to 302 (CSGNLFTQRT…RGWRLSYRAA (113 aa)). Ca(2+) contacts are provided by Glu-240, Asp-250, Asp-287, and Ser-289. Cys-247 and Cys-265 are oxidised to a cystine. Sushi domains follow at residues 304–369 (NECP…TCKI) and 370–439 (VDCG…TCLP). Intrachain disulfides connect Cys-306–Cys-354, Cys-334–Cys-367, Cys-372–Cys-419, Cys-402–Cys-437, Cys-441–Cys-577, and Cys-480–Cys-496. N-linked (GlcNAc...) asparagine glycans are attached at residues Asn-390 and Asn-412. The Peptidase S1 domain occupies 454 to 701 (IFNGRPAQKG…NKDWIQRVTG (248 aa)). His-495 serves as the catalytic Charge relay system. N-linked (GlcNAc...) asparagine glycosylation is present at Leu-538. Asp-557 serves as the catalytic Charge relay system. A glycan (N-linked (GlcNAc...) asparagine) is linked at Glu-604. 2 disulfides stabilise this stretch: Cys-619/Cys-636 and Cys-647/Cys-677. Ser-651 functions as the Charge relay system in the catalytic mechanism.

This sequence belongs to the peptidase S1 family. In terms of assembly, homodimer. Interacts with the oligomeric lectins MBL2, FCN2 and FCN3; triggers the lectin pathway of complement through activation of C3. Interacts with SERPING1. Interacts with COLEC11; probably triggers the lectin pathway of complement. The iron and 2-oxoglutarate dependent 3-hydroxylation of aspartate and asparagine is (R) stereospecific within EGF domains. Post-translationally, N-glycosylated. Some N-linked glycan are of the complex-type. In terms of processing, autoproteolytic processing of the proenzyme produces the active enzyme composed on the heavy and the light chain held together by a disulfide bond. Isoform 1 but not isoform 2 is activated through autoproteolytic processing. Protein of the plasma which is primarily expressed by liver.

The protein localises to the secreted. With respect to regulation, inhibited by SERPING1 and A2M. Functions in the lectin pathway of complement, which performs a key role in innate immunity by recognizing pathogens through patterns of sugar moieties and neutralizing them. The lectin pathway is triggered upon binding of mannan-binding lectin (MBL) and ficolins to sugar moieties which leads to activation of the associated proteases MASP1 and MASP2. Functions as an endopeptidase and may activate MASP2 or C2 or directly activate C3 the key component of complement reaction. Isoform 2 may have an inhibitory effect on the activation of the lectin pathway of complement or may cleave IGFBP5. Also plays a role in development. In Rattus norvegicus (Rat), this protein is Mannan-binding lectin serine protease 1 (Masp1).